The primary structure comprises 1307 residues: Light-sensor Protein kinase (1307 aa).

The 180-residue stretch at 215 to 394 folds into the GAF domain; it reads DIELLCDTIV…VFGMQLNLHV (180 aa). Cys-320 is a binding site for phytochromobilin. In terms of domain architecture, PAS spans 609-680; it reads LANEMSRVLE…RLLSLALQGE (72 aa). The PAC domain maps to 683–739; the sequence is QNVEIKLKTFGTQTTERAVILIVNACCSRDASDFVVGVFFVGQDVTEQRMFMDRFTR. Residues 779–1003 are hinge; that stretch reads DHATGSVERL…WSFSEKFFQW (225 aa). Residues 1004 to 1307 form the Protein kinase domain; sequence IQITGSLGSG…DSYPSTEEPS (304 aa). Residues 1010–1018 and Lys-1031 each bind ATP; that span reads LGSGSSATV. Residue Asp-1127 is part of the active site.

This sequence in the N-terminal section; belongs to the phytochrome family. It in the C-terminal section; belongs to the protein kinase superfamily. Ser/Thr protein kinase family. As to quaternary structure, homodimer. In terms of processing, contains one covalently linked phytochromobilin chromophore.

It is found in the cell membrane. The enzyme catalyses L-seryl-[protein] + ATP = O-phospho-L-seryl-[protein] + ADP + H(+). The catalysed reaction is L-threonyl-[protein] + ATP = O-phospho-L-threonyl-[protein] + ADP + H(+). Functionally, regulatory photoreceptor which exists in two forms that are reversibly interconvertible by light: the Pr form that absorbs maximally in the red region of the spectrum and the Pfr form that absorbs maximally in the far-red region. Photoconversion of Pr to Pfr induces an array of morphogenic responses, whereas reconversion of Pfr to Pr cancels the induction of those responses. Pfr controls the expression of a number of nuclear genes including those encoding the small subunit of ribulose-bisphosphate carboxylase, chlorophyll A/B binding protein, protochlorophyllide reductase, rRNA, etc. It also controls the expression of its own gene(s) in a negative feedback fashion. In Ceratodon purpureus (Fire moss), this protein is Light-sensor Protein kinase (PHY1).